The primary structure comprises 182 residues: Adenine phosphoribosyltransferase (182 aa).

It belongs to the purine/pyrimidine phosphoribosyltransferase family. As to quaternary structure, homodimer.

The protein localises to the cytoplasm. The catalysed reaction is AMP + diphosphate = 5-phospho-alpha-D-ribose 1-diphosphate + adenine. It participates in purine metabolism; AMP biosynthesis via salvage pathway; AMP from adenine: step 1/1. Its function is as follows. Catalyzes a salvage reaction resulting in the formation of AMP, that is energically less costly than de novo synthesis. The sequence is that of Adenine phosphoribosyltransferase from Campylobacter concisus (strain 13826).